The sequence spans 620 residues: UDP-glucose:protein N-beta-glucosyltransferase (620 aa).

This sequence belongs to the glycosyltransferase 41 family.

It localises to the cytoplasm. The enzyme catalyses L-asparaginyl-[protein] + UDP-alpha-D-glucose = N(4)-(beta-D-glucosyl)-L-asparaginyl-[protein] + UDP + H(+). Its pathway is protein modification; protein glycosylation. Functionally, inverting glycosyltransferase that catalyzes the transfer of one glucose moiety from UDP-glucose to an asparagine residue in peptides and proteins containing the NX(S/T) motif, resulting in their modification with a beta-linked 1,N-glucose. Likely acts as a key component of a general protein glycosylation system. The polypeptide is UDP-glucose:protein N-beta-glucosyltransferase (Actinobacillus pleuropneumoniae serotype 5b (strain L20)).